We begin with the raw amino-acid sequence, 252 residues long: 2-succinyl-6-hydroxy-2,4-cyclohexadiene-1-carboxylate synthase (252 aa).

It belongs to the AB hydrolase superfamily. MenH family. As to quaternary structure, monomer.

It catalyses the reaction 5-enolpyruvoyl-6-hydroxy-2-succinyl-cyclohex-3-ene-1-carboxylate = (1R,6R)-6-hydroxy-2-succinyl-cyclohexa-2,4-diene-1-carboxylate + pyruvate. Its pathway is quinol/quinone metabolism; 1,4-dihydroxy-2-naphthoate biosynthesis; 1,4-dihydroxy-2-naphthoate from chorismate: step 3/7. It participates in quinol/quinone metabolism; menaquinone biosynthesis. In terms of biological role, catalyzes a proton abstraction reaction that results in 2,5-elimination of pyruvate from 2-succinyl-5-enolpyruvyl-6-hydroxy-3-cyclohexene-1-carboxylate (SEPHCHC) and the formation of 2-succinyl-6-hydroxy-2,4-cyclohexadiene-1-carboxylate (SHCHC). This Shigella boydii serotype 4 (strain Sb227) protein is 2-succinyl-6-hydroxy-2,4-cyclohexadiene-1-carboxylate synthase.